We begin with the raw amino-acid sequence, 318 residues long: L-lactate dehydrogenase (318 aa).

NAD(+) is bound by residues Val18, Asp39, Lys44, Tyr69, and 83-84 (GA). 2 residues coordinate substrate: Gln86 and Arg92. NAD(+)-binding positions include Ser105, 122–124 (VSN), and Ser147. Substrate is bound at residue 124 to 127 (NPVD). Residue 152-155 (DTSR) participates in substrate binding. Residue His179 is the Proton acceptor of the active site. A Phosphotyrosine modification is found at Tyr225. A substrate-binding site is contributed by Thr234.

It belongs to the LDH/MDH superfamily. LDH family. As to quaternary structure, homotetramer.

It is found in the cytoplasm. It catalyses the reaction (S)-lactate + NAD(+) = pyruvate + NADH + H(+). It functions in the pathway fermentation; pyruvate fermentation to lactate; (S)-lactate from pyruvate: step 1/1. Catalyzes the conversion of lactate to pyruvate. The chain is L-lactate dehydrogenase from Clostridium botulinum (strain Loch Maree / Type A3).